The chain runs to 88 residues: Apolipoprotein C-I (88 aa).

A signal peptide spans 1–26; it reads MRLILSLPVLVVVLSMVLEGPAPAQA.

The protein belongs to the apolipoprotein C1 family. Expressed in the liver.

The protein resides in the secreted. In terms of biological role, inhibitor of lipoprotein binding to the low density lipoprotein (LDL) receptor, LDL receptor-related protein, and very low density lipoprotein (VLDL) receptor. Associates with high density lipoproteins (HDL) and the triacylglycerol-rich lipoproteins in the plasma and makes up about 10% of the protein of the VLDL and 2% of that of HDL. Appears to interfere directly with fatty acid uptake and is also the major plasma inhibitor of cholesteryl ester transfer protein (CETP). Binds free fatty acids and reduces their intracellular esterification. Modulates the interaction of APOE with beta-migrating VLDL and inhibits binding of beta-VLDL to the LDL receptor-related protein. The chain is Apolipoprotein C-I (APOC1) from Canis lupus familiaris (Dog).